Consider the following 569-residue polypeptide: Sugar transporter STL1 (569 aa).

The Cytoplasmic portion of the chain corresponds to 1–29 (MKDLKLSNFKGKFISRTSHWGLTGKKLRY). The chain crosses the membrane as a helical span at residues 30–50 (FITIASMTGFSLFGYDQGLMA). Residues 51-79 (SLITGKQFNYEFPATKENGDHDRHATVVQ) are Extracellular-facing. A helical membrane pass occupies residues 80-100 (GATTSCYELGCFAGSLFVMFC). Residues 101 to 107 (GERIGRK) lie on the Cytoplasmic side of the membrane. A helical transmembrane segment spans residues 108–128 (PLILMGSVITIIGAVISTCAF). Position 129 (R129) is a topological domain, extracellular. A helical transmembrane segment spans residues 130-150 (GYWALGQFIIGRVVTGVGTGL). At 151–168 (NTSTIPVWQSEMSKAENR) the chain is on the cytoplasmic side. A helical transmembrane segment spans residues 169-189 (GLLVNLEGSTIAFGTMIAYWI). The Extracellular segment spans residues 190-203 (DFGLSYTNSSVQWR). N197 carries an N-linked (GlcNAc...) asparagine glycan. A helical membrane pass occupies residues 204–224 (FPVSMQIVFALFLLAFMIKLP). The Cytoplasmic portion of the chain corresponds to 225 to 291 (ESPRWLISQS…SRGRSQNLQR (67 aa)). The chain crosses the membrane as a helical span at residues 292 to 312 (ALIAASTQFFQQFTGCNAAIY). Topologically, residues 313-330 (YSTVLFNKTIKLDYRLSM) are extracellular. N-linked (GlcNAc...) asparagine glycosylation is present at N319. A helical transmembrane segment spans residues 331-351 (IIGGVFATIYALSTIGSFFLI). Topologically, residues 352–358 (EKLGRRK) are cytoplasmic. A helical transmembrane segment spans residues 359 to 379 (LFLLGATGQAVSFTITFACLV). The Extracellular segment spans residues 380 to 389 (KENKENARGA). Residues 390-410 (AVGLFLFITFFGLSLLSLPWI) form a helical membrane-spanning segment. Residues 411 to 426 (YPPEIASMKVRASTNA) lie on the Cytoplasmic side of the membrane. The chain crosses the membrane as a helical span at residues 427-447 (FSTCTNWLCNFAVVMFTPIFI). Residues 448-453 (GQSGWG) lie on the Extracellular side of the membrane. Residues 454-474 (CYLFFAVMNYLYIPVIFFFYP) traverse the membrane as a helical segment. At 475–569 (ETAGRSLEEI…TVNDKANFEG (95 aa)) the chain is on the cytoplasmic side. The span at 524-533 (DDEMEKEDFG) shows a compositional bias: acidic residues. A disordered region spans residues 524–569 (DDEMEKEDFGEDRVEDTYNQINGDNSSSSSNIKNEDTVNDKANFEG). Residues 556 to 569 (KNEDTVNDKANFEG) are compositionally biased toward basic and acidic residues.

The protein belongs to the major facilitator superfamily. Sugar transporter (TC 2.A.1.1) family.

Its subcellular location is the membrane. The chain is Sugar transporter STL1 (STL1) from Saccharomyces cerevisiae (strain ATCC 204508 / S288c) (Baker's yeast).